Consider the following 329-residue polypeptide: Aspartate carbamoyltransferase catalytic subunit (329 aa).

Positions 63 and 64 each coordinate carbamoyl phosphate. Lys-91 serves as a coordination point for L-aspartate. Arg-113, His-141, and Gln-144 together coordinate carbamoyl phosphate. Arg-179 and Arg-234 together coordinate L-aspartate. The carbamoyl phosphate site is built by Gly-275 and Pro-276.

Belongs to the aspartate/ornithine carbamoyltransferase superfamily. ATCase family. As to quaternary structure, heterododecamer (2C3:3R2) of six catalytic PyrB chains organized as two trimers (C3), and six regulatory PyrI chains organized as three dimers (R2).

It carries out the reaction carbamoyl phosphate + L-aspartate = N-carbamoyl-L-aspartate + phosphate + H(+). It participates in pyrimidine metabolism; UMP biosynthesis via de novo pathway; (S)-dihydroorotate from bicarbonate: step 2/3. In terms of biological role, catalyzes the condensation of carbamoyl phosphate and aspartate to form carbamoyl aspartate and inorganic phosphate, the committed step in the de novo pyrimidine nucleotide biosynthesis pathway. The protein is Aspartate carbamoyltransferase catalytic subunit of Magnetococcus marinus (strain ATCC BAA-1437 / JCM 17883 / MC-1).